Consider the following 213-residue polypeptide: Serine acetyltransferase (213 aa).

The protein belongs to the transferase hexapeptide repeat family.

It is found in the cytoplasm. It carries out the reaction L-serine + acetyl-CoA = O-acetyl-L-serine + CoA. It participates in amino-acid biosynthesis; L-cysteine biosynthesis; L-cysteine from L-serine: step 1/2. This chain is Serine acetyltransferase (cysE), found in Staphylococcus aureus (strain COL).